The sequence spans 191 residues: Thymidine kinase (191 aa).

ATP contacts are provided by residues 15–22 (GPMYSGKT) and 88–91 (DEAQ). Glu-89 serves as the catalytic Proton acceptor. Zn(2+) contacts are provided by Cys-145, Cys-148, Cys-183, and Cys-186.

This sequence belongs to the thymidine kinase family. In terms of assembly, homotetramer.

It localises to the cytoplasm. It carries out the reaction thymidine + ATP = dTMP + ADP + H(+). The protein is Thymidine kinase of Clostridium botulinum (strain Kyoto / Type A2).